Consider the following 228-residue polypeptide: Probable ribosomal RNA small subunit methyltransferase A (228 aa).

S-adenosyl-L-methionine contacts are provided by H9, L11, G34, E55, D78, and N93.

The protein belongs to the class I-like SAM-binding methyltransferase superfamily. rRNA adenine N(6)-methyltransferase family. RsmA subfamily.

It is found in the cytoplasm. Its function is as follows. Specifically dimethylates two adjacent adenosines in the loop of a conserved hairpin near the 3'-end of 16S rRNA in the 30S particle. May play a critical role in biogenesis of 30S subunits. This Pyrobaculum aerophilum (strain ATCC 51768 / DSM 7523 / JCM 9630 / CIP 104966 / NBRC 100827 / IM2) protein is Probable ribosomal RNA small subunit methyltransferase A.